The sequence spans 394 residues: Transcriptional regulator Myc-1 (394 aa).

Thr-58 is a glycosylation site (O-linked (GlcNAc) threonine). The 9aaTAD signature appears at 76–84; sequence EMVSEFLGD. Disordered regions lie at residues 177–247 and 283–318; these read SGKS…SRYP and EASSNSNSRHVKQRKCTSPRTSDSEDNDKRRTHNVL. A compositionally biased stretch (acidic residues) spans 205–226; that stretch reads DSEEEEEEEEEEEEEEEEEEID. Residues 229–238 are compositionally biased toward basic and acidic residues; the sequence is TVEKRQKKNE. The region spanning 310-362 is the bHLH domain; that stretch reads DKRRTHNVLERQRRNELKLSFFALRDEIPDVANNEKAAKVVILKKATECIHSM. Residues 369-390 form a leucine-zipper region; that stretch reads LLSIKEQLRRKSEQLKHRLQLL.

Efficient DNA binding requires dimerization with another bHLH protein. Binds DNA as a heterodimer with MAX.

The protein resides in the nucleus. Its function is as follows. Transcription factor that binds DNA in a non-specific manner, yet also specifically recognizes the core sequence 5'-CAC[GA]TG-3'. Activates the transcription of growth-related genes. The polypeptide is Transcriptional regulator Myc-1 (myca) (Cyprinus carpio (Common carp)).